The following is a 76-amino-acid chain: uncharacterized protein (76 aa).

The signal sequence occupies residues 1-15 (MYLPLLLFCVISCYG).

This is an uncharacterized protein from Magallana gigas (Pacific oyster).